The sequence spans 351 residues: Sesquiterpene synthase 14 (351 aa).

Mg(2+)-binding residues include Asp-87, Asn-223, Ser-227, and Glu-231. Positions 87–91 match the DDXXD motif motif; that stretch reads DEYTD. Positions 223-231 match the NSE/DTE motif motif; sequence NDIASYNKE. Positions 312 and 313 each coordinate (2E,6E)-farnesyl diphosphate.

This sequence belongs to the terpene synthase family. The cofactor is Mg(2+).

The enzyme catalyses (2E,6E)-farnesyl diphosphate = pentalenene + diphosphate. In terms of biological role, terpene cyclase that catalyzes the cyclization of farnesyl diphosphate (FPP) to pentalenene as a major product, as well as caryophyllene. The sequence is that of Sesquiterpene synthase 14 from Postia placenta (strain ATCC 44394 / Madison 698-R) (Brown rot fungus).